Here is a 763-residue protein sequence, read N- to C-terminus: F-box protein SKP2 (763 aa).

Positions 54 to 100 (KSSLMCLPTKVLLLILRTLDFNTLVTLCQVNSRFYNLITNEFLFQNV) constitute an F-box domain. Threonine 594 is subject to Phosphothreonine.

In terms of assembly, interacts with SKP1. Component of the probable SCF(SKP2) complex containing CDC53, SKP1, RBX1 and SKP2. May interact with ribosomes.

The protein localises to the cytoplasm. It participates in protein modification; protein ubiquitination. Its function is as follows. Substrate recognition component of a SCF (SKP1-CUL1-F-box protein) E3 ubiquitin-protein ligase complex which mediates the ubiquitination and subsequent proteasomal degradation of target proteins. Probably recognizes and binds to phosphorylated target proteins. Regulates protein levels of sulfur metabolism enzymes. The SCF(SKP2) complex may regulate some transcription factors or regulators of cysteine and methionine biosynthesis. This is F-box protein SKP2 (SKP2) from Saccharomyces cerevisiae (strain ATCC 204508 / S288c) (Baker's yeast).